A 352-amino-acid polypeptide reads, in one-letter code: Sphingosine 1-phosphate receptor 2 (352 aa).

Over 1 to 34 (MGGLYSEYLNPEKVLEHYNYTKETLDMQETTSRK) the chain is Extracellular. N-linked (GlcNAc...) asparagine glycosylation occurs at asparagine 19. The chain crosses the membrane as a helical span at residues 35-59 (VASAFIIILCCAIVVENLLVLIAVA). The Cytoplasmic portion of the chain corresponds to 60 to 66 (RNSKFHS). Residues 67-95 (AMYLFLGNLAASDLLAGVAFVANTLLSGH) traverse the membrane as a helical segment. Residues 96-109 (VTLSLTPVQWFARE) are Extracellular-facing. The helical transmembrane segment at 110–128 (GSAFITLSASVFSLLAIAI) threads the bilayer. Residues 129–147 (ERQVALAKVKLYGSDKSCR) are Cytoplasmic-facing. The chain crosses the membrane as a helical span at residues 148–173 (MLMLIGASWLISLILGGLPILGWNCL). Residues 174 to 189 (NQLEACSTVLPLYAKH) are Extracellular-facing. A helical membrane pass occupies residues 190 to 210 (YVLCVVTIFSVILLAIVALYV). Over 211–233 (RIYFVVRSSHADVAGPQTLALLK) the chain is Cytoplasmic. The chain crosses the membrane as a helical span at residues 234-255 (TVTIVLGVFIICWLPAFSILLL). The Extracellular portion of the chain corresponds to 256-271 (DSTCPVRACPVLYKAH). Residues 272 to 292 (YFFAFATLNSLLNPVIYTWRS) traverse the membrane as a helical segment. Residues 293–352 (RDLRREVLRPLQCWRRGKGVTGRRGGNPGHRLLPLRSSSSLERGMHMPTSPTFLEGNTVV) are Cytoplasmic-facing. The S-palmitoyl cysteine moiety is linked to residue cysteine 305. The tract at residues 333 to 352 (LERGMHMPTSPTFLEGNTVV) is disordered.

It belongs to the G-protein coupled receptor 1 family. As to expression, most abundant in heart and lung; low, but clearly observed in kidney, liver and thymus; much lower but detectable in brain, testis, stomach and intestine. Not significantly detected in any of the sections of embryonic day (E) 14-18, except in embryonic brain.

The protein localises to the cell membrane. Its function is as follows. Receptor for the lysosphingolipid sphingosine 1-phosphate (S1P). S1P is a bioactive lysophospholipid that elicits diverse physiological effects on most types of cells and tissues. Receptor for the chemokine-like protein FAM19A5. Mediates the inhibitory effect of FAM19A5 on vascular smooth muscle cell proliferation and migration. In lymphoid follicles, couples the binding of S1P to the activation of GNA13 and downstream inhibition of AKT activation leading to suppression of germinal center (GC) B cell growth and migration outside the GC niche. The sequence is that of Sphingosine 1-phosphate receptor 2 (S1pr2) from Mus musculus (Mouse).